The sequence spans 700 residues: Phenylalanine ammonia-lyase hkm12 (700 aa).

The active-site Proton donor/acceptor is tyrosine 82. The segment at residues alanine 183–glycine 185 is a cross-link (5-imidazolinone (Ala-Gly)). Serine 184 carries the post-translational modification 2,3-didehydroalanine (Ser). Positions 242, 325, 331, 361, 432, 460, and 463 each coordinate (E)-cinnamate.

This sequence belongs to the PAL/histidase family. Post-translationally, contains an active site 4-methylidene-imidazol-5-one (MIO), which is formed autocatalytically by cyclization and dehydration of residues Ala-Ser-Gly.

It catalyses the reaction L-phenylalanine = (E)-cinnamate + NH4(+). The protein operates within secondary metabolite biosynthesis. Phenylalanine ammonia-lyase; part of the gene cluster that mediates the biosynthesis of hancockiamides, an unusual new family of N-cinnamoylated piperazines. The NRPS hkm10 and the NmrA-like reductase hkm9 are proposed to convert two molecules of L-Phe to the intermediary piperazine called xenocockiamide A. Xenocockiamide A is then converted to hancockiamide D via a series of hydroxylations and O-methylations. The tyrosinase hkm6 may catalyze an aromatic hydroxylation, then the 2-oxoglutarate-dependent Fe(II) dioxygenase hkm4 and the FAD-dependent phenol hydroxylase hkm7 may catalyze consecutive hydroxylations to install 2 more hydroxy groups, and the methyltransferase hkm8 probably catalyzes two methylations using 2 molecules of S-adenosyl-L-methionine (SAM). The NRPS hkm11 activates and transfers trans-cinnamate supplied by the PAL hkm12 to hancockiamide D and produces hancockiamide A. NRPS Hkm11 has the flexibility to tolerate the bulky hancockiamide G as a substrate and the absence of the acetyl-transferase hkm3 opens up the opportunity for hkm11 to introduce a second N-cinnamoyl moiety. The cytochrome P450 monooxygenase hkm5 catalyzes the methylenedioxy bridge formation, converting hancockiamide A into hancockiamide G. Hkm5 can also convert hancockiamide B into hancockiamide C, and hancockiamide D into hancockiamide H. The N-acetyltransferase hkm3 finally transfers an acetyl group to 1-N of piperazine, converting hancockiamide A into hancockiamide B and hancockiamide G into hancockiamide C. The sequence is that of Phenylalanine ammonia-lyase hkm12 from Aspergillus hancockii.